A 199-amino-acid polypeptide reads, in one-letter code: Recombination protein RecR (199 aa).

The C4-type zinc-finger motif lies at 57–72 (CTVCGHITDIDPCAIC). Residues 80–176 (TVVCVVQDSR…RVTRLAHGLP (97 aa)) form the Toprim domain.

This sequence belongs to the RecR family.

In terms of biological role, may play a role in DNA repair. It seems to be involved in an RecBC-independent recombinational process of DNA repair. It may act with RecF and RecO. The polypeptide is Recombination protein RecR (Exiguobacterium sp. (strain ATCC BAA-1283 / AT1b)).